A 156-amino-acid chain; its full sequence is Large ribosomal subunit protein uL15 (156 aa).

The segment at 25–48 is disordered; it reads RGIGCGKGKTSGRGHKGQKARSGV. Over residues 34–43 the composition is skewed to basic residues; it reads TSGRGHKGQK.

Belongs to the universal ribosomal protein uL15 family. As to quaternary structure, part of the 50S ribosomal subunit.

In terms of biological role, binds to the 23S rRNA. In Wolbachia pipientis subsp. Culex pipiens (strain wPip), this protein is Large ribosomal subunit protein uL15.